A 521-amino-acid chain; its full sequence is Importin subunit alpha-4 (521 aa).

The interval Met-1–Arg-29 is disordered. The residue at position 2 (Ala-2) is an N-acetylalanine. An IBB domain is found at Ala-2–Glu-58. Positions Lys-18–Arg-29 are enriched in basic and acidic residues. The short motif at Glu-43–Pro-52 is the Nuclear localization signal element. Residues Ser-56 and Ser-60 each carry the phosphoserine modification. The ARM 1; truncated repeat unit spans residues Phe-66–Pro-106. ARM repeat units lie at residues Ile-107–Gln-149, Thr-150–Tyr-194, Val-195–Pro-233, Pro-234–Gln-278, Met-279–Gln-318, Thr-319–Gln-360, Val-361–Arg-400, and Lys-401–Gly-443. The NLS binding site (major) stretch occupies residues Trp-137–Arg-229. The NLS binding site (minor) stretch occupies residues Arg-306–Asn-394. An ARM 10; atypical repeat occupies Ser-447–Phe-485. A Phosphotyrosine modification is found at Tyr-484.

This sequence belongs to the importin alpha family. Forms a complex with importin subunit beta-1. Interacts with DDX21. Interacts with NCBP1, NCBP2/CBP20 and NCBP3. Interacts with RCC1. Interacts with ZC3H11A. In terms of assembly, (Microbial infection) Interacts with HIV-1 integrase; this interaction might play a role in nuclear import of HIV pre-integration complex. As to quaternary structure, (Microbial infection) Interacts with influenza virus nucleoprotein; this interaction might play a role in nuclear import of viral genome. Ubiquitous. Highest levels in heart and skeletal muscle.

Its subcellular location is the cytoplasm. The protein resides in the nucleus. In terms of biological role, functions in nuclear protein import as an adapter protein for nuclear receptor KPNB1. Binds specifically and directly to substrates containing either a simple or bipartite NLS motif. Docking of the importin/substrate complex to the nuclear pore complex (NPC) is mediated by KPNB1 through binding to nucleoporin FxFG repeats and the complex is subsequently translocated through the pore by an energy requiring, Ran-dependent mechanism. At the nucleoplasmic side of the NPC, Ran binds to importin-beta and the three components separate and importin-alpha and -beta are re-exported from the nucleus to the cytoplasm where GTP hydrolysis releases Ran from importin. The directionality of nuclear import is thought to be conferred by an asymmetric distribution of the GTP- and GDP-bound forms of Ran between the cytoplasm and nucleus. In vitro, mediates the nuclear import of human cytomegalovirus UL84 by recognizing a non-classical NLS. Recognizes NLSs of influenza A virus nucleoprotein probably through ARM repeats 7-9. In Homo sapiens (Human), this protein is Importin subunit alpha-4 (KPNA3).